Here is a 286-residue protein sequence, read N- to C-terminus: GTP cyclohydrolase MptA (286 aa).

It belongs to the GTP cyclohydrolase IV family. As to quaternary structure, homodimer. It depends on Fe(2+) as a cofactor.

It carries out the reaction GTP + H2O = 7,8-dihydroneopterin 2',3'-cyclic phosphate + formate + diphosphate + H(+). It functions in the pathway cofactor biosynthesis; 5,6,7,8-tetrahydromethanopterin biosynthesis. Its function is as follows. Converts GTP to 7,8-dihydro-D-neopterin 2',3'-cyclic phosphate, the first intermediate in the biosynthesis of coenzyme methanopterin. This chain is GTP cyclohydrolase MptA, found in Thermoplasma acidophilum (strain ATCC 25905 / DSM 1728 / JCM 9062 / NBRC 15155 / AMRC-C165).